We begin with the raw amino-acid sequence, 146 residues long: Keratin-associated protein 4-1 (146 aa).

A run of 18 repeats spans residues 5–9 (CCGSV), 24–28 (CCRPS), 29–33 (CCQTT), 34–38 (CCCPS), 44–48 (CCRPS), 54–58 (CCQTT), 59–63 (CCRPS), 64–68 (CCHPV), 69–73 (CCQTT), 83–87 (CCRPL), 88–92 (CCQTT), 102–106 (CCRPL), 107–111 (CCQTT), 121–125 (CCRPL), 126–130 (CCQTT), 131–135 (CCRAT), 136–140 (CCRPS), and 141–145 (CCGSS). An 18 X 5 AA repeats of C-C-[GRQC]-[SPT]-[VSTL] region spans residues 5–145 (CCGSVCSDQG…CCRPSCCGSS (141 aa)).

This sequence belongs to the KRTAP type 4 family. As to quaternary structure, interacts with hair keratins. Expressed in the hair follicles.

Functionally, in the hair cortex, hair keratin intermediate filaments are embedded in an interfilamentous matrix, consisting of hair keratin-associated proteins (KRTAP), which are essential for the formation of a rigid and resistant hair shaft through their extensive disulfide bond cross-linking with abundant cysteine residues of hair keratins. The matrix proteins include the high-sulfur and high-glycine-tyrosine keratins. The protein is Keratin-associated protein 4-1 (KRTAP4-1) of Homo sapiens (Human).